Reading from the N-terminus, the 196-residue chain is MNYNIYVCGVGGQGIIKTSVIIGEAAMKKDINVVMSEIHGMAQRGGSVSTEIRIGEVHGSIIPDGEADLVLAFEPLEAIRALPKMSEESEVILNTSVIPPFNLMRSPHPYPPLDEIMSTLEERAGSVRGFNAEEIALKAGHILSLNMVMLGAAAATPGFPLESESLISSMRDNLPSRLIDVNLRAFRDGFGAAAES.

In terms of assembly, heterodimer of the IorA and IorB subunits.

It catalyses the reaction indole-3-pyruvate + 2 oxidized [2Fe-2S]-[ferredoxin] + CoA = (indol-3-yl)acetyl-CoA + 2 reduced [2Fe-2S]-[ferredoxin] + CO2 + H(+). Catalyzes the ferredoxin-dependent oxidative decarboxylation of arylpyruvates. This is Indolepyruvate oxidoreductase subunit IorB (iorB) from Methanothermobacter thermautotrophicus (strain ATCC 29096 / DSM 1053 / JCM 10044 / NBRC 100330 / Delta H) (Methanobacterium thermoautotrophicum).